Here is a 217-residue protein sequence, read N- to C-terminus: Small ribosomal subunit protein uS3c (217 aa).

A KH type-2 domain is found at 47–119 (VRTHIKSSSN…KLHIAIEKVA (73 aa)).

This sequence belongs to the universal ribosomal protein uS3 family. As to quaternary structure, part of the 30S ribosomal subunit.

It is found in the plastid. Its subcellular location is the chloroplast. The sequence is that of Small ribosomal subunit protein uS3c (rps3) from Pinus koraiensis (Korean pine).